We begin with the raw amino-acid sequence, 509 residues long: Aspartyl/glutamyl-tRNA(Asn/Gln) amidotransferase subunit B (509 aa).

It belongs to the GatB/GatE family. GatB subfamily. In terms of assembly, heterotrimer of A, B and C subunits.

The catalysed reaction is L-glutamyl-tRNA(Gln) + L-glutamine + ATP + H2O = L-glutaminyl-tRNA(Gln) + L-glutamate + ADP + phosphate + H(+). It catalyses the reaction L-aspartyl-tRNA(Asn) + L-glutamine + ATP + H2O = L-asparaginyl-tRNA(Asn) + L-glutamate + ADP + phosphate + 2 H(+). Functionally, allows the formation of correctly charged Asn-tRNA(Asn) or Gln-tRNA(Gln) through the transamidation of misacylated Asp-tRNA(Asn) or Glu-tRNA(Gln) in organisms which lack either or both of asparaginyl-tRNA or glutaminyl-tRNA synthetases. The reaction takes place in the presence of glutamine and ATP through an activated phospho-Asp-tRNA(Asn) or phospho-Glu-tRNA(Gln). This chain is Aspartyl/glutamyl-tRNA(Asn/Gln) amidotransferase subunit B, found in Psychrobacter cryohalolentis (strain ATCC BAA-1226 / DSM 17306 / VKM B-2378 / K5).